We begin with the raw amino-acid sequence, 793 residues long: 3',5'-cyclic-nucleotide phosphodiesterase regA (793 aa).

Residues 1–153 form a disordered region; sequence MNNKQEEIDQ…SSHRVSDFSD (153 aa). Composition is skewed to low complexity over residues 13–34, 54–69, and 80–121; these read SSTS…DSTS, NKNN…SNNN, and NNSS…NNNN. Residues 161-280 form the Response regulatory domain; it reads RILVADDDDV…LLKKKIDTVL (120 aa). Aspartate 212 is modified (4-aspartylphosphate). The PDEase domain occupies 410–733; it reads RRNSIPTFPQ…ENWQAYMELQ (324 aa). Histidine 487 acts as the Proton donor in catalysis. A divalent metal cation-binding residues include histidine 491, histidine 527, aspartate 528, and aspartate 639. A disordered region spans residues 756 to 793; sequence KLPKIDEEENRDKVSSSSSSSTAPLTSTSSSNNETSSS. Low complexity predominate over residues 770–793; it reads SSSSSSSTAPLTSTSSSNNETSSS.

It belongs to the cyclic nucleotide phosphodiesterase family. A divalent metal cation serves as cofactor. Post-translationally, the phosphorelay mechanism involves the sequential transfer of a phosphate group from Asp-212 of pde2 to 'His-65' of rdeA. Phosphorylation of Asp-212 activates the phosphodiesterase domain.

The protein localises to the cytoplasm. It is found in the cytosol. The enzyme catalyses 3',5'-cyclic AMP + H2O = AMP + H(+). Inhibited by 3-isobutyl-1-methylxanthine (IBMX). Its function is as follows. Phosphodiesterase specific for cAMP. Involved in the degradation of intracellular cAMP. Morphological suppressor of tagB. Phosphorelay protein that accepts phosphate from rdeA or supplies phosphate from regA; depending on the relative concentration of the phosphodonor proteins. This Dictyostelium discoideum (Social amoeba) protein is 3',5'-cyclic-nucleotide phosphodiesterase regA (regA).